Reading from the N-terminus, the 557-residue chain is Formate--tetrahydrofolate ligase (557 aa).

An ATP-binding site is contributed by 65-72 (TPAGEGKT).

It belongs to the formate--tetrahydrofolate ligase family.

The catalysed reaction is (6S)-5,6,7,8-tetrahydrofolate + formate + ATP = (6R)-10-formyltetrahydrofolate + ADP + phosphate. The protein operates within one-carbon metabolism; tetrahydrofolate interconversion. This Zymomonas mobilis subsp. mobilis (strain ATCC 31821 / ZM4 / CP4) protein is Formate--tetrahydrofolate ligase.